Reading from the N-terminus, the 198-residue chain is Ribonuclease HII (198 aa).

An RNase H type-2 domain is found at 3-198; sequence LSVGGIDEAG…SWETVGKLFK (196 aa). Asp-9, Glu-10, and Asp-104 together coordinate a divalent metal cation.

It belongs to the RNase HII family. Mn(2+) serves as cofactor. The cofactor is Mg(2+).

The protein resides in the cytoplasm. The catalysed reaction is Endonucleolytic cleavage to 5'-phosphomonoester.. Its function is as follows. Endonuclease that specifically degrades the RNA of RNA-DNA hybrids. The polypeptide is Ribonuclease HII (Pyrobaculum arsenaticum (strain DSM 13514 / JCM 11321 / PZ6)).